Here is a 340-residue protein sequence, read N- to C-terminus: uncharacterized protein (340 aa).

Residues K193–T207 show a composition bias toward basic and acidic residues. The interval K193 to I340 is disordered. A compositionally biased stretch (low complexity) spans F217–S228. Basic and acidic residues predominate over residues E235–I244. Composition is skewed to polar residues over residues S263–Q279 and P307–L328.

This is an uncharacterized protein from Saccharomyces cerevisiae (strain ATCC 204508 / S288c) (Baker's yeast).